Here is a 491-residue protein sequence, read N- to C-terminus: Cytochrome P450 2F2 (491 aa).

Residue Cys-436 participates in heme binding.

It belongs to the cytochrome P450 family. Heme serves as cofactor.

Its subcellular location is the endoplasmic reticulum membrane. The protein localises to the microsome membrane. Functionally, involved in the regio- and stereoselective transformation of naphthalene to trans-1R-hydroxy-2R-glutathionyl-1,2-dihydronaphthalene in the presence of glutathione and glutathione S-transferases. It specifically catalyzes the production of a very reactive and potentially toxic intermediate, the 2R,2S arene oxide, that is associated with necrosis of the unciliated bronchiolar epithelial cells or club cells in lung. This chain is Cytochrome P450 2F2 (Cyp2f2), found in Rattus norvegicus (Rat).